The primary structure comprises 145 residues: 3-hydroxyacyl-[acyl-carrier-protein] dehydratase FabZ (145 aa).

The active site involves His-48.

The protein belongs to the thioester dehydratase family. FabZ subfamily.

Its subcellular location is the cytoplasm. The catalysed reaction is a (3R)-hydroxyacyl-[ACP] = a (2E)-enoyl-[ACP] + H2O. Functionally, involved in unsaturated fatty acids biosynthesis. Catalyzes the dehydration of short chain beta-hydroxyacyl-ACPs and long chain saturated and unsaturated beta-hydroxyacyl-ACPs. This is 3-hydroxyacyl-[acyl-carrier-protein] dehydratase FabZ from Saccharophagus degradans (strain 2-40 / ATCC 43961 / DSM 17024).